The chain runs to 469 residues: Ribosomal protein uS12 methylthiotransferase RimO (469 aa).

An MTTase N-terminal domain is found at 34–144 (NKIGFVSLGC…VLEHVHQFAP (111 aa)). [4Fe-4S] cluster-binding residues include cysteine 43, cysteine 79, cysteine 108, cysteine 176, cysteine 180, and cysteine 183. One can recognise a Radical SAM core domain in the interval 162 to 399 (LTPKHYAYLK…MLVQQEISAA (238 aa)). A TRAM domain is found at 402 to 468 (QKRIGSTMKV…EYDLWGSLVR (67 aa)).

Belongs to the methylthiotransferase family. RimO subfamily. The cofactor is [4Fe-4S] cluster.

It localises to the cytoplasm. It carries out the reaction L-aspartate(89)-[ribosomal protein uS12]-hydrogen + (sulfur carrier)-SH + AH2 + 2 S-adenosyl-L-methionine = 3-methylsulfanyl-L-aspartate(89)-[ribosomal protein uS12]-hydrogen + (sulfur carrier)-H + 5'-deoxyadenosine + L-methionine + A + S-adenosyl-L-homocysteine + 2 H(+). Its function is as follows. Catalyzes the methylthiolation of an aspartic acid residue of ribosomal protein uS12. This is Ribosomal protein uS12 methylthiotransferase RimO from Vibrio vulnificus (strain YJ016).